Reading from the N-terminus, the 491-residue chain is Acetyl-coenzyme A carboxylase carboxyl transferase subunit beta, chloroplastic (491 aa).

A CoA carboxyltransferase N-terminal domain is found at 224-491 (LWIQCENCYG…FFPLNPKKIK (268 aa)). Residues Cys-228, Cys-231, Cys-247, and Cys-250 each coordinate Zn(2+). The segment at 228-250 (CENCYGLNYKKNLKSKINICEQC) adopts a C4-type zinc-finger fold.

It belongs to the AccD/PCCB family. In terms of assembly, acetyl-CoA carboxylase is a heterohexamer composed of biotin carboxyl carrier protein, biotin carboxylase and 2 subunits each of ACCase subunit alpha and ACCase plastid-coded subunit beta (accD). Zn(2+) is required as a cofactor.

It localises to the plastid. The protein resides in the chloroplast stroma. The enzyme catalyses N(6)-carboxybiotinyl-L-lysyl-[protein] + acetyl-CoA = N(6)-biotinyl-L-lysyl-[protein] + malonyl-CoA. It functions in the pathway lipid metabolism; malonyl-CoA biosynthesis; malonyl-CoA from acetyl-CoA: step 1/1. Component of the acetyl coenzyme A carboxylase (ACC) complex. Biotin carboxylase (BC) catalyzes the carboxylation of biotin on its carrier protein (BCCP) and then the CO(2) group is transferred by the transcarboxylase to acetyl-CoA to form malonyl-CoA. The sequence is that of Acetyl-coenzyme A carboxylase carboxyl transferase subunit beta, chloroplastic from Vitis vinifera (Grape).